A 964-amino-acid polypeptide reads, in one-letter code: uncharacterized protein (964 aa).

Disordered stretches follow at residues 1–31 (MDSE…SDCE) and 169–199 (EETY…DEIS). The span at 10-27 (HSICNSVSSGENYKSPES) shows a compositional bias: polar residues. Residues 656-840 (EVMESLQVEI…LILNQTSMAK (185 aa)) are a coiled coil.

This is an uncharacterized protein from Caenorhabditis elegans.